The following is a 269-amino-acid chain: Chromophore lyase CRL, chloroplastic (269 aa).

Residues 19 to 36 (ARGLVVKTLVLIGGALLI) form a helical membrane-spanning segment.

This sequence belongs to the CpcT/CpeT biliprotein lyase family. As to expression, mostly expressed in shoot apices, to a lower extent, in leaves, inflorescence stems, buds and cotyledons, and, at low levels, in roots and siliques.

Its subcellular location is the plastid. The protein resides in the chloroplast outer membrane. Covalently attaches a chromophore to Cys residue(s) of phycobiliproteins. Required for plastid division, and involved in cell differentiation and regulation of the cell division plane. Maintenance of plastid homeostasis controls plant preconditioning to stress and stress acclimation. Its function is as follows. Confers sensitivity to cabbage leaf curl virus (CaLCuV), probably by supporting viral movement. In Arabidopsis thaliana (Mouse-ear cress), this protein is Chromophore lyase CRL, chloroplastic (CRL).